We begin with the raw amino-acid sequence, 323 residues long: Lipid A biosynthesis myristoyltransferase (323 aa).

A helical membrane pass occupies residues 23 to 43 (YWGAWLGVAAMAGIALTPPKF). An HXXXXD motif motif is present at residues 139–144 (HGWAVD).

Belongs to the LpxL/LpxM/LpxP family. LpxM subfamily.

Its subcellular location is the cell inner membrane. It carries out the reaction alpha-Kdo-(2-&gt;4)-alpha-Kdo-(2-&gt;6)-(dodecanoyl)-lipid IVA (E. coli) + tetradecanoyl-[ACP] = alpha-Kdo-(2-&gt;4)-alpha-Kdo-(2-&gt;6)-lipid A (E. coli) + holo-[ACP]. The catalysed reaction is (9Z)-hexadecenoyl-(Kdo)2-lipid IVA (E. coli) + tetradecanoyl-[ACP] = ((9Z)-hexadecenoyl-tetradecanoyl)-(Kdo)2-lipid A + holo-[ACP]. It participates in glycolipid biosynthesis; KDO(2)-lipid A biosynthesis; KDO(2)-lipid A from CMP-3-deoxy-D-manno-octulosonate and lipid IV(A): step 4/4. Its pathway is bacterial outer membrane biogenesis; lipopolysaccharide biosynthesis. Functionally, catalyzes the transfer of myristate from myristoyl-[acyl-carrier-protein] (ACP) to Kdo(2)-(lauroyl)-lipid IV(A) to form Kdo(2)-lipid A. Can probably also catalyze the transfer of myristate to Kdo(2)-(palmitoleoyl)-lipid IV(A) to form the cold-adapted Kdo(2)-lipid A. In vitro, can acylate Kdo(2)-lipid IV(A), but acylation of (KDO)2-(lauroyl)-lipid IV(A) is about 100 times faster. In vitro, can use lauroyl-ACP but displays a slight kinetic preference for myristoyl-ACP. The chain is Lipid A biosynthesis myristoyltransferase from Escherichia coli (strain K12).